The chain runs to 266 residues: Hydroxyethylthiazole kinase (266 aa).

Substrate is bound at residue Met39. ATP-binding residues include Lys115 and Thr160. Gly187 is a substrate binding site.

Belongs to the Thz kinase family. The cofactor is Mg(2+).

It carries out the reaction 5-(2-hydroxyethyl)-4-methylthiazole + ATP = 4-methyl-5-(2-phosphooxyethyl)-thiazole + ADP + H(+). It participates in cofactor biosynthesis; thiamine diphosphate biosynthesis; 4-methyl-5-(2-phosphoethyl)-thiazole from 5-(2-hydroxyethyl)-4-methylthiazole: step 1/1. In terms of biological role, catalyzes the phosphorylation of the hydroxyl group of 4-methyl-5-beta-hydroxyethylthiazole (THZ). The polypeptide is Hydroxyethylthiazole kinase (Staphylococcus aureus (strain MSSA476)).